We begin with the raw amino-acid sequence, 313 residues long: Catalase-related peroxidase (313 aa).

Residue H28 is part of the active site. Y294 serves as a coordination point for heme.

It belongs to the catalase family. Monomer. It depends on heme as a cofactor.

Functionally, has an organic peroxide-dependent peroxidase activity. Exhibits strong peroxidase activity using organic hydroperoxides as cosubstrates, weak peroxidase activity using hydrogen peroxide and negligible catalase activity. May have a role in elimination of reactive oxygen species, in particular by deactivating hydroperoxides. The chain is Catalase-related peroxidase from Mycolicibacterium paratuberculosis (strain ATCC BAA-968 / K-10) (Mycobacterium paratuberculosis).